The primary structure comprises 149 residues: MGLEKSFILFPLLILVLGWVQSSLGKESPAMKFERQHMDSTGSSSSSPTYCNQMMKRRNMTQGSCKPVNTFVHEPLVDVHAVCSQENVTCKNGQKNCYKSHSTLHITDCRLKGSSKYPNCQYQTSQQQKHIIVACEGNPSVPVHXDAXV.

The N-terminal stretch at 1 to 25 (MGLEKSFILFPLLILVLGWVQSSLG) is a signal peptide. Substrate-binding residues include lysine 32 and arginine 35. Histidine 37 acts as the Proton acceptor in catalysis. Cystine bridges form between cysteine 51-cysteine 109, cysteine 65-cysteine 120, cysteine 83-cysteine 135, and cysteine 90-cysteine 97. Asparagine 59 carries N-linked (GlcNAc...) asparagine glycosylation. A substrate-binding site is contributed by 66–70 (KPVNT). Residue asparagine 87 is glycosylated (N-linked (GlcNAc...) asparagine). Substrate is bound by residues lysine 91 and arginine 110. Histidine 144 functions as the Proton donor in the catalytic mechanism.

The protein belongs to the pancreatic ribonuclease family. As to quaternary structure, monomer. Interacts with and forms tight 1:1 complexes with RNH1. Dimerization of two such complexes may occur. Interaction with RNH1 inhibits this protein. In terms of tissue distribution, pancreas.

It localises to the secreted. The catalysed reaction is an [RNA] containing cytidine + H2O = an [RNA]-3'-cytidine-3'-phosphate + a 5'-hydroxy-ribonucleotide-3'-[RNA].. The enzyme catalyses an [RNA] containing uridine + H2O = an [RNA]-3'-uridine-3'-phosphate + a 5'-hydroxy-ribonucleotide-3'-[RNA].. Functionally, endonuclease that catalyzes the cleavage of RNA on the 3' side of pyrimidine nucleotides. Acts on single-stranded and double-stranded RNA. The polypeptide is Ribonuclease pancreatic (RNASE1) (Abrothrix jelskii (Jelski's altiplano mouse)).